Here is a 368-residue protein sequence, read N- to C-terminus: Homoserine O-acetyltransferase (368 aa).

The AB hydrolase-1 domain occupies 43-354 (NVVVVCHALT…DYGHDAFLVE (312 aa)). Serine 148 serves as the catalytic Nucleophile. A substrate-binding site is contributed by arginine 220. Active-site residues include aspartate 314 and histidine 348. Residue aspartate 349 participates in substrate binding.

Belongs to the AB hydrolase superfamily. MetX family. As to quaternary structure, homodimer.

It localises to the cytoplasm. It carries out the reaction L-homoserine + acetyl-CoA = O-acetyl-L-homoserine + CoA. Its pathway is amino-acid biosynthesis; L-methionine biosynthesis via de novo pathway; O-acetyl-L-homoserine from L-homoserine: step 1/1. Transfers an acetyl group from acetyl-CoA to L-homoserine, forming acetyl-L-homoserine. The protein is Homoserine O-acetyltransferase of Sulfurimonas autotrophica (strain ATCC BAA-671 / DSM 16294 / JCM 11897 / OK10).